The following is a 137-amino-acid chain: ATP synthase epsilon chain, chloroplastic (137 aa).

The protein belongs to the ATPase epsilon chain family. F-type ATPases have 2 components, CF(1) - the catalytic core - and CF(0) - the membrane proton channel. CF(1) has five subunits: alpha(3), beta(3), gamma(1), delta(1), epsilon(1). CF(0) has three main subunits: a, b and c.

Its subcellular location is the plastid. The protein localises to the chloroplast thylakoid membrane. In terms of biological role, produces ATP from ADP in the presence of a proton gradient across the membrane. This chain is ATP synthase epsilon chain, chloroplastic, found in Oryza nivara (Indian wild rice).